Here is a 284-residue protein sequence, read N- to C-terminus: ATP phosphoribosyltransferase (284 aa).

Belongs to the ATP phosphoribosyltransferase family. Long subfamily. It depends on Mg(2+) as a cofactor.

The protein localises to the cytoplasm. The catalysed reaction is 1-(5-phospho-beta-D-ribosyl)-ATP + diphosphate = 5-phospho-alpha-D-ribose 1-diphosphate + ATP. It functions in the pathway amino-acid biosynthesis; L-histidine biosynthesis; L-histidine from 5-phospho-alpha-D-ribose 1-diphosphate: step 1/9. Feedback inhibited by histidine. In terms of biological role, catalyzes the condensation of ATP and 5-phosphoribose 1-diphosphate to form N'-(5'-phosphoribosyl)-ATP (PR-ATP). Has a crucial role in the pathway because the rate of histidine biosynthesis seems to be controlled primarily by regulation of HisG enzymatic activity. The chain is ATP phosphoribosyltransferase from Corynebacterium kroppenstedtii (strain DSM 44385 / JCM 11950 / CIP 105744 / CCUG 35717).